The following is a 1068-amino-acid chain: Target of Nesh-SH3 (1068 aa).

Positions 1 to 21 are cleaved as a signal peptide; sequence MLSSLGCLLLCGSITLALGNA. Asn-37 carries N-linked (GlcNAc...) asparagine glycosylation. Positions 116–214 constitute a Fibronectin type-III 1 domain; that stretch reads KPLQLVVGTL…KIFNHKTVVG (99 aa). Disordered stretches follow at residues 315–351 and 384–811; these read SKTP…DVSE and VFSS…SITD. Residues 326-339 are compositionally biased toward low complexity; that stretch reads RPTTVTPETVPRST. Over residues 340–351 the composition is skewed to polar residues; the sequence is KPTTSSALDVSE. The span at 447–462 shows a compositional bias: low complexity; it reads QPTTPAPQQTTSIPST. Basic residues predominate over residues 463 to 473; the sequence is PKRRPRPKPPR. The segment covering 482–499 has biased composition (polar residues); it reads AGTITPKISKSPEPTWTT. A compositionally biased stretch (pro residues) spans 532–544; that stretch reads RAPPKPKTSPRPR. Polar residues predominate over residues 562 to 574; that stretch reads PKTSPSPEVSYTT. 2 stretches are compositionally biased toward low complexity: residues 603–631 and 737–750; these read IPFI…STQE and PPLR…GTPL. Residues 802–811 show a composition bias toward polar residues; the sequence is PDNSPCSITD. A Fibronectin type-III 2 domain is found at 833–926; it reads PPTNLTVVTV…NTVAFSTESA (94 aa).

As to quaternary structure, probably interacts with ABI3. Expressed in brain, heart, lung, liver, pancreas kidney and placenta.

It is found in the secreted. This chain is Target of Nesh-SH3, found in Homo sapiens (Human).